The following is a 357-amino-acid chain: Bcl-2/adenovirus E1B 19 kDa-interacting protein 2-like protein (357 aa).

Basic and acidic residues predominate over residues 32-49 (ELELKEEWQDEEFPRLLP). The disordered stretch occupies residues 32-156 (ELELKEEWQD…LPRAEGLGTS (125 aa)). The segment covering 105-117 (ASPTQSAPSSPDG) has biased composition (polar residues). Acidic residues predominate over residues 119-134 (SDLEIDELETPSDSEQ). Positions 136–149 (DSGHEFEWEDELPR) are enriched in basic and acidic residues. In terms of domain architecture, CRAL-TRIO spans 191-352 (DMTVIEPYKK…AVRQLDRDLH (162 aa)).

In terms of assembly, homodimer. Interacts with BCL2, ARHGAP1, MIF and GFER. Isoform 2 is expressed in placenta and lung.

May be a bridge molecule between BCL2 and ARHGAP1/CDC42 in promoting cell death. This is Bcl-2/adenovirus E1B 19 kDa-interacting protein 2-like protein (BNIPL) from Homo sapiens (Human).